Consider the following 35-residue polypeptide: Cytochrome b6-f complex subunit 5 (35 aa).

The chain crosses the membrane as a helical span at residues 5–25 (LLTGIVLGSIFITLLGLLAAA).

Belongs to the PetG family. The 4 large subunits of the cytochrome b6-f complex are cytochrome b6, subunit IV (17 kDa polypeptide, PetD), cytochrome f and the Rieske protein, while the 4 small subunits are PetG, PetL, PetM and PetN. The complex functions as a dimer.

The protein resides in the plastid. The protein localises to the chloroplast thylakoid membrane. In terms of biological role, component of the cytochrome b6-f complex, which mediates electron transfer between photosystem II (PSII) and photosystem I (PSI), cyclic electron flow around PSI, and state transitions. PetG is required for either the stability or assembly of the cytochrome b6-f complex. The sequence is that of Cytochrome b6-f complex subunit 5 from Cyanidium caldarium (Red alga).